We begin with the raw amino-acid sequence, 59 residues long: uncharacterized protein (59 aa).

The N-terminal stretch at 1–21 (MYLFYVLLSSLFLSALIYVIG) is a signal peptide. Residues 22–24 (KSH) are Extracellular-facing. Residues 25-45 (PNLFMFISLFVNVVTILYLVF) traverse the membrane as a helical segment. Over 46 to 59 (KDYGQYIIAKPINT) the chain is Cytoplasmic.

The protein resides in the host membrane. This is an uncharacterized protein from Acidianus convivator (ABV).